A 269-amino-acid polypeptide reads, in one-letter code: Eukaryotic translation initiation factor 3 subunit G-1 (269 aa).

An RRM domain is found at Ala188–Pro266.

This sequence belongs to the eIF-3 subunit G family. As to quaternary structure, component of the eukaryotic translation initiation factor 3 (eIF-3) complex. The eIF-3 complex interacts with pix.

The protein resides in the cytoplasm. Its function is as follows. RNA-binding component of the eukaryotic translation initiation factor 3 (eIF-3) complex, which is involved in protein synthesis of a specialized repertoire of mRNAs and, together with other initiation factors, stimulates binding of mRNA and methionyl-tRNAi to the 40S ribosome. The eIF-3 complex specifically targets and initiates translation of a subset of mRNAs involved in cell proliferation. This subunit can bind 18S rRNA. The sequence is that of Eukaryotic translation initiation factor 3 subunit G-1 from Drosophila virilis (Fruit fly).